The following is a 186-amino-acid chain: uncharacterized protein (186 aa).

In terms of domain architecture, Cupin type-2 spans 89-164; the sequence is LMSLGIGEDI…NTPLKLYSIY (76 aa). Residue 117 to 124 coordinates ATP; it reads GIVKMGKS.

This is an uncharacterized protein from Bacillus subtilis (strain 168).